Consider the following 804-residue polypeptide: DNA mismatch repair protein MutS (804 aa).

614 to 621 (GPNMAGKS) contacts ATP.

It belongs to the DNA mismatch repair MutS family.

This protein is involved in the repair of mismatches in DNA. It is possible that it carries out the mismatch recognition step. This protein has a weak ATPase activity. The sequence is that of DNA mismatch repair protein MutS from Ehrlichia chaffeensis (strain ATCC CRL-10679 / Arkansas).